A 791-amino-acid polypeptide reads, in one-letter code: uncharacterized protein (791 aa).

The segment at 267 to 288 (APGESSAQSSYEQSTRAGDSAP) is disordered. Residues 271-283 (SSAQSSYEQSTRA) are compositionally biased toward polar residues.

This is an uncharacterized protein from Treponema pallidum (strain Nichols).